The primary structure comprises 245 residues: 3-deoxy-manno-octulosonate cytidylyltransferase (245 aa).

The protein belongs to the KdsB family.

The protein resides in the cytoplasm. It catalyses the reaction 3-deoxy-alpha-D-manno-oct-2-ulosonate + CTP = CMP-3-deoxy-beta-D-manno-octulosonate + diphosphate. It participates in nucleotide-sugar biosynthesis; CMP-3-deoxy-D-manno-octulosonate biosynthesis; CMP-3-deoxy-D-manno-octulosonate from 3-deoxy-D-manno-octulosonate and CTP: step 1/1. The protein operates within bacterial outer membrane biogenesis; lipopolysaccharide biosynthesis. Activates KDO (a required 8-carbon sugar) for incorporation into bacterial lipopolysaccharide in Gram-negative bacteria. The sequence is that of 3-deoxy-manno-octulosonate cytidylyltransferase from Fusobacterium nucleatum subsp. nucleatum (strain ATCC 25586 / DSM 15643 / BCRC 10681 / CIP 101130 / JCM 8532 / KCTC 2640 / LMG 13131 / VPI 4355).